We begin with the raw amino-acid sequence, 575 residues long: Phosphoenolpyruvate-protein phosphotransferase (575 aa).

Residue His-191 is the Tele-phosphohistidine intermediate of the active site. Arg-298 and Arg-334 together coordinate phosphoenolpyruvate. Residues Glu-435 and Asp-459 each coordinate Mg(2+). Phosphoenolpyruvate-binding positions include 458–459 (ND) and Arg-469. The active-site Proton donor is the Cys-506.

The protein belongs to the PEP-utilizing enzyme family. Homodimer. Mg(2+) serves as cofactor.

The protein resides in the cytoplasm. It carries out the reaction L-histidyl-[protein] + phosphoenolpyruvate = N(pros)-phospho-L-histidyl-[protein] + pyruvate. Functionally, general (non sugar-specific) component of the phosphoenolpyruvate-dependent sugar phosphotransferase system (sugar PTS). This major carbohydrate active-transport system catalyzes the phosphorylation of incoming sugar substrates concomitantly with their translocation across the cell membrane. Enzyme I transfers the phosphoryl group from phosphoenolpyruvate (PEP) to the phosphoryl carrier protein (HPr). In Lactococcus lactis subsp. lactis (strain IL1403) (Streptococcus lactis), this protein is Phosphoenolpyruvate-protein phosphotransferase (ptsI).